Consider the following 146-residue polypeptide: Hemoglobin subunit beta (146 aa).

The region spanning H2 to H146 is the Globin domain. The heme b site is built by H63 and H92.

The protein belongs to the globin family. As to quaternary structure, heterotetramer of two alpha chains and two beta chains. As to expression, red blood cells.

In terms of biological role, involved in oxygen transport from the lung to the various peripheral tissues. The sequence is that of Hemoglobin subunit beta (HBB) from Phalacrocorax carbo (Great cormorant).